Reading from the N-terminus, the 440-residue chain is 3-phosphoshikimate 1-carboxyvinyltransferase (440 aa).

3 residues coordinate 3-phosphoshikimate: lysine 19, serine 20, and arginine 24. Lysine 19 lines the phosphoenolpyruvate pocket. Phosphoenolpyruvate is bound by residues glycine 92 and arginine 121. The 3-phosphoshikimate site is built by serine 166, glutamine 168, aspartate 315, and lysine 342. Glutamine 168 contacts phosphoenolpyruvate. Aspartate 315 functions as the Proton acceptor in the catalytic mechanism. Residues arginine 346 and arginine 399 each contribute to the phosphoenolpyruvate site.

The protein belongs to the EPSP synthase family. Monomer.

The protein localises to the cytoplasm. The enzyme catalyses 3-phosphoshikimate + phosphoenolpyruvate = 5-O-(1-carboxyvinyl)-3-phosphoshikimate + phosphate. The protein operates within metabolic intermediate biosynthesis; chorismate biosynthesis; chorismate from D-erythrose 4-phosphate and phosphoenolpyruvate: step 6/7. In terms of biological role, catalyzes the transfer of the enolpyruvyl moiety of phosphoenolpyruvate (PEP) to the 5-hydroxyl of shikimate-3-phosphate (S3P) to produce enolpyruvyl shikimate-3-phosphate and inorganic phosphate. In Leptospira interrogans serogroup Icterohaemorrhagiae serovar Lai (strain 56601), this protein is 3-phosphoshikimate 1-carboxyvinyltransferase.